The primary structure comprises 301 residues: Methionyl-tRNA formyltransferase (301 aa).

109–112 (SILP) lines the (6S)-5,6,7,8-tetrahydrofolate pocket.

This sequence belongs to the Fmt family.

The catalysed reaction is L-methionyl-tRNA(fMet) + (6R)-10-formyltetrahydrofolate = N-formyl-L-methionyl-tRNA(fMet) + (6S)-5,6,7,8-tetrahydrofolate + H(+). In terms of biological role, attaches a formyl group to the free amino group of methionyl-tRNA(fMet). The formyl group appears to play a dual role in the initiator identity of N-formylmethionyl-tRNA by promoting its recognition by IF2 and preventing the misappropriation of this tRNA by the elongation apparatus. In Campylobacter curvus (strain 525.92), this protein is Methionyl-tRNA formyltransferase.